A 122-amino-acid polypeptide reads, in one-letter code: Basic phospholipase A2 homolog myotoxin II (122 aa).

Disulfide bonds link cysteine 26-cysteine 116, cysteine 28-cysteine 44, cysteine 43-cysteine 95, cysteine 49-cysteine 122, cysteine 50-cysteine 88, cysteine 57-cysteine 81, and cysteine 75-cysteine 86. The interval 105–118 is important for membrane-damaging activities in eukaryotes and bacteria; heparin-binding; the sequence is KKYRYNYLKPFCKK.

This sequence belongs to the phospholipase A2 family. Group II subfamily. K49 sub-subfamily. As to quaternary structure, homodimer; non-covalently linked (probable alternative/compact dimer conformation). Expressed by the venom gland.

Its subcellular location is the secreted. Its activity is regulated as follows. Myotoxic activity is inhibited by suramin and rosmarinic acid. Cytotoxic and myotoxic activities are inhibited by pre-incubation with varespladib. Suramin inhibits this myotoxin by (i) direct blockage of the MDoS and MDiS, preventing the toxin/membrane interaction and disruption and (ii) formation of an oligomeric complex, resulting in a tetrameric configuration for which both MDoS and MDiS becomes physically inaccessible, thus avoiding any possibility of toxin-membrane interaction or disruption. Heparin completely inhibits the cytotoxic and bactericidal activities, but only partially the myotoxic, edema-inducing and lethal effects. Its function is as follows. Snake venom phospholipase A2 (PLA2) homolog that lacks enzymatic activity. Shows high myotoxin activities. Also shows neurotoxicity, since it induces muscle paralysis when tested on mouse phrenic-diaphragm preparations. Displays edema-inducing activities. Also displays antimicrobial activity against E.coli and C.albicans, as well as antitumoral activity against some human and mice cell lines. In addition, it is effective as parasiticidal agent against Leishmania sp. and S.mansoni. It also disrupts negatively charged liposomes in a dose- and temperature-dependent manner and shows toxicity by intraperitoneal route. In contrast to other phospholipase A2-like toxins, this myotoxin does not require fatty acid binding to be active. This Bothrops moojeni (Lance-headed viper) protein is Basic phospholipase A2 homolog myotoxin II.